A 497-amino-acid polypeptide reads, in one-letter code: Glycerol kinase (497 aa).

Residue Thr-11 coordinates ADP. Thr-11, Ser-12, and Ser-13 together coordinate ATP. Thr-11 is a binding site for sn-glycerol 3-phosphate. Residue Arg-15 coordinates ADP. 4 residues coordinate sn-glycerol 3-phosphate: Arg-81, Glu-82, Tyr-133, and Asp-242. Residues Arg-81, Glu-82, Tyr-133, Asp-242, and Gln-243 each coordinate glycerol. ADP contacts are provided by Thr-264 and Gly-307. Positions 264, 307, 311, and 412 each coordinate ATP. The ADP site is built by Gly-412 and Asn-416.

This sequence belongs to the FGGY kinase family.

It carries out the reaction glycerol + ATP = sn-glycerol 3-phosphate + ADP + H(+). Its pathway is polyol metabolism; glycerol degradation via glycerol kinase pathway; sn-glycerol 3-phosphate from glycerol: step 1/1. With respect to regulation, inhibited by fructose 1,6-bisphosphate (FBP). Key enzyme in the regulation of glycerol uptake and metabolism. Catalyzes the phosphorylation of glycerol to yield sn-glycerol 3-phosphate. This chain is Glycerol kinase, found in Leptothrix cholodnii (strain ATCC 51168 / LMG 8142 / SP-6) (Leptothrix discophora (strain SP-6)).